A 766-amino-acid polypeptide reads, in one-letter code: DNA ligase (766 aa).

A disordered region spans residues 1 to 30 (MSTVNAKGAKPATDANGQSLNPEEPSEALR). NAD(+) is bound by residues 57 to 61 (DAEYD), 106 to 107 (SL), and E141. The N6-AMP-lysine intermediate role is filled by K143. Residues R164, E201, K317, and K341 each contribute to the NAD(+) site. Zn(2+)-binding residues include C435, C438, C454, and C460. In terms of domain architecture, BRCT spans 669–758 (STPRTLEGVT…PEAFGDRADA (90 aa)). Residues 747 to 766 (QGPEAFGDRADAADQPAAGE) form a disordered region.

Belongs to the NAD-dependent DNA ligase family. LigA subfamily. Mg(2+) is required as a cofactor. The cofactor is Mn(2+).

The enzyme catalyses NAD(+) + (deoxyribonucleotide)n-3'-hydroxyl + 5'-phospho-(deoxyribonucleotide)m = (deoxyribonucleotide)n+m + AMP + beta-nicotinamide D-nucleotide.. DNA ligase that catalyzes the formation of phosphodiester linkages between 5'-phosphoryl and 3'-hydroxyl groups in double-stranded DNA using NAD as a coenzyme and as the energy source for the reaction. It is essential for DNA replication and repair of damaged DNA. The sequence is that of DNA ligase from Kocuria rhizophila (strain ATCC 9341 / DSM 348 / NBRC 103217 / DC2201).